Consider the following 129-residue polypeptide: Small ribosomal subunit protein uS11 (129 aa).

The protein belongs to the universal ribosomal protein uS11 family. In terms of assembly, part of the 30S ribosomal subunit. Interacts with proteins S7 and S18. Binds to IF-3.

Located on the platform of the 30S subunit, it bridges several disparate RNA helices of the 16S rRNA. Forms part of the Shine-Dalgarno cleft in the 70S ribosome. The polypeptide is Small ribosomal subunit protein uS11 (Salmonella newport (strain SL254)).